A 197-amino-acid chain; its full sequence is Casparian strip membrane protein 4 (197 aa).

Over 1–34 the chain is Cytoplasmic; sequence MMSSTTIDVPAESSNVAKGKAVLVAAPRPGGWKK. Residues 35-55 form a helical membrane-spanning segment; that stretch reads GIAIVDFVLRLGAVAAALGAA. Residues 56–85 are Extracellular-facing; sequence TTMATADQTLPFFTQFFQFEASYDSFTTFQ. A helical transmembrane segment spans residues 86–106; it reads FFVITMALVGCYLVLSLPLSI. At 107–118 the chain is on the cytoplasmic side; the sequence is VSIIRPHALGPK. Residues 119 to 139 form a helical membrane-spanning segment; sequence LFLIILDTVFLTLATASAASA. At 140–171 the chain is on the extracellular side; that stretch reads AAVVYVAHNGNQDSNWLAICNQFGDFCAQTSG. Residues 172-192 form a helical membrane-spanning segment; sequence AVVSSLVAVVVFVLLIVMSAL. The Cytoplasmic segment spans residues 193 to 197; sequence ALGKH.

It belongs to the Casparian strip membrane proteins (CASP) family. As to quaternary structure, homodimer and heterodimers.

It localises to the cell membrane. In terms of biological role, regulates membrane-cell wall junctions and localized cell wall deposition. Required for establishment of the Casparian strip membrane domain (CSD) and the subsequent formation of Casparian strips, a cell wall modification of the root endodermis that determines an apoplastic barrier between the intraorganismal apoplasm and the extraorganismal apoplasm and prevents lateral diffusion. In Lotus japonicus (Lotus corniculatus var. japonicus), this protein is Casparian strip membrane protein 4.